Here is an 859-residue protein sequence, read N- to C-terminus: MSRKSSTEYVHNQEDADIEVFESEYRTYRESEAAENRDGLHNGDEENWKVNSSKQKFGVTKNELSDVLYDSIPAYEESTVTLKEYYDHSIKNNLTAKSAGSYLVSLFPIIKWFPHYNFTWGYADLVAGITVGCVLVPQSMSYAQIASLSPEYGLYSSFIGAFIYSLFATSKDVCIGPVAVMSLQTAKVIAEVLKKYPEDQTEVTAPIIATTLCLLCGIVATGLGILRLGFLVELISLNAVAGFMTGSAFNIIWGQIPALMGYNSLVNTREATYKVVINTLKHLPNTKLDAVFGLIPLVILYVWKWWCGTFGITLADRYYRNQPKVANRLKSFYFYAQAMRNAVVIVVFTAISWSITRNKSSKDRPISILGTVPSGLNEVGVMKIPDGLLSNMSSEIPASIIVLVLEHIAISKSFGRINDYKVVPDQELIAIGVTNLIGTFFHSYPATGSFSRSALKAKCNVRTPFSGVFTGGCVLLALYCLTDAFFFIPKATLSAVIIHAVSDLLTSYKTTWTFWKTNPLDCISFIVTVFITVFSSIENGIYFAMCWSCAMLLLKQAFPAGKFLGRVEVAEVLNPTVQEDIDAVISSNELPNELNKQVKSTVEVLPAPEYKFSVKWVPFDHGYSRELNINTTVRPPPPGVIVYRLGDSFTYVNCSRHYDIIFDRIKEETRRGQLITLRKKSDRPWNDPGEWKMPDSLKSLFKFKRHSATTNSDLPISNGSSNGETYEKPLLKVVCLDFSQVAQVDSTAVQSLVDLRKAVNRYADRQVEFHFAGIISPWIKRSLLSVKFGTTNEEYSDDSIIAGHSSFHVAKVLKDDVDYTDEDSRISTSYSNYETLCAATGTNLPFFHIDIPDFSKWDV.

Asn-51 and Asn-93 each carry an N-linked (GlcNAc...) asparagine glycan. 8 helical membrane-spanning segments follow: residues 94-114, 116-136, 148-168, 173-193, 206-226, 234-254, 292-312, and 332-352; these read LTAKSAGSYLVSLFPIIKWFP, YNFTWGYADLVAGITVGCVLV, LSPEYGLYSSFIGAFIYSLFA, VCIGPVAVMSLQTAKVIAEVL, PIIATTLCLLCGIVATGLGIL, LISLNAVAGFMTGSAFNIIWG, FGLIPLVILYVWKWWCGTFGI, and FYFYAQAMRNAVVIVVFTAIS. 2 N-linked (GlcNAc...) asparagine glycosylation sites follow: Asn-358 and Asn-391. Transmembrane regions (helical) follow at residues 395–415, 428–448, 468–488, and 525–545; these read EIPASIIVLVLEHIAISKSFG, LIAIGVTNLIGTFFHSYPATG, VFTGGCVLLALYCLTDAFFFI, and FIVTVFITVFSSIENGIYFAM. 3 N-linked (GlcNAc...) asparagine glycosylation sites follow: Asn-630, Asn-653, and Asn-718. The STAS domain occupies 630–808; that stretch reads NTTVRPPPPG…SIIAGHSSFH (179 aa).

The protein belongs to the SLC26A/SulP transporter (TC 2.A.53) family.

It is found in the membrane. Its function is as follows. High affinity uptake of sulfate into the cell. The polypeptide is Sulfate permease 1 (SUL1) (Saccharomyces cerevisiae (strain ATCC 204508 / S288c) (Baker's yeast)).